Consider the following 254-residue polypeptide: Alcohol dehydrogenase (254 aa).

10-33 (FVAGLGGIGLDTSRELVKRDLKNL) is an NAD(+) binding site. Serine 138 contacts substrate. Tyrosine 151 serves as the catalytic Proton acceptor.

The protein belongs to the short-chain dehydrogenases/reductases (SDR) family. As to quaternary structure, homodimer.

It catalyses the reaction a primary alcohol + NAD(+) = an aldehyde + NADH + H(+). The catalysed reaction is a secondary alcohol + NAD(+) = a ketone + NADH + H(+). This is Alcohol dehydrogenase (Adh) from Drosophila guanche (Fruit fly).